The primary structure comprises 512 residues: MENLFIFLFALLLFCFMLLKLSKKYSALKLPPGPRPLPIIGNLHQIGGGLMHHILREMARTYGPLFRIKFGQVSTIVVSSPEIAKEIFRTHDVVFSYRPQNIAVFNVMTYNFSNIAFAPYGNYWRQMRKICVMEILGASRVRSFGSIRQEEVMNLIRFVGSHKGKLVNVSEKIYGLTYSITARAAFGKVSKYQQVFKEHMDKYDDLARGLDIADFYPSMKFLRLVTGMERKLKVMFKEVDEILQVIIDEHRDQRMKKIRSKVDDNEKEEEEGNEDIVDVLMNLQQSGQTELPVTDDNIKAVILDIFGAGGDTTAATLEWALAESLKNKQVLKRAQEELRTIFHSKRNVDESGFNQLKYLPAIVKETLRLHPPAPLSLPRECSEECNIYGYDIPAKTRVMVNIWAMGRDPKYWSEPEEFKPERFIDSRIDYKGNDFEYIPFGAGRRICPGMSFAIPNVALPLAQLLFHFDWKVDDDAGKLEDLDMVEHPVLEARRKNELKLIPVIYEGSCLKN.

Residues 1–24 (MENLFIFLFALLLFCFMLLKLSKK) form the signal peptide. 2 N-linked (GlcNAc...) asparagine glycosylation sites follow: asparagine 111 and asparagine 168. Cysteine 447 is a heme binding site.

This sequence belongs to the cytochrome P450 family.

This is Cytochrome P450 71BT1 from Catharanthus roseus (Madagascar periwinkle).